A 100-amino-acid polypeptide reads, in one-letter code: Apolipoprotein C-II (100 aa).

The first 25 residues, 1 to 25 (MDARSLLLLWLLLPLLLLLGCEVQG), serve as a signal peptide directing secretion. Positions 65–73 (AVDETIRDI) are lipid binding. Residues 77–100 (GSAAISTYTGILTDQILTMLQGKQ) are lipoprotein lipase cofactor.

Belongs to the apolipoprotein C2 family. Proapolipoprotein C-II is synthesized as a sialic acid containing glycoprotein which is subsequently desialylated prior to its proteolytic processing. Post-translationally, proapolipoprotein C-II, the major form found in plasma undergoes proteolytic cleavage of its N-terminal hexapeptide to generate apolipoprotein C-II, which occurs as the minor form in plasma. As to expression, liver.

Its subcellular location is the secreted. Functionally, component of chylomicrons, very low-density lipoproteins (VLDL), low-density lipoproteins (LDL), and high-density lipoproteins (HDL) in plasma. Plays an important role in lipoprotein metabolism as an activator of lipoprotein lipase. Both proapolipoprotein C-II and apolipoprotein C-II can activate lipoprotein lipase. This chain is Apolipoprotein C-II (APOC2), found in Cavia porcellus (Guinea pig).